The chain runs to 277 residues: Large ribosomal subunit protein uL2 (277 aa).

2 disordered regions span residues 37-58 (LHSK…GGGH) and 222-277 (GVAM…NRRR). The span at 268 to 277 (VRRRKQNRRR) shows a compositional bias: basic residues.

It belongs to the universal ribosomal protein uL2 family. In terms of assembly, part of the 50S ribosomal subunit. Forms a bridge to the 30S subunit in the 70S ribosome.

One of the primary rRNA binding proteins. Required for association of the 30S and 50S subunits to form the 70S ribosome, for tRNA binding and peptide bond formation. It has been suggested to have peptidyltransferase activity; this is somewhat controversial. Makes several contacts with the 16S rRNA in the 70S ribosome. The polypeptide is Large ribosomal subunit protein uL2 (Parafrankia sp. (strain EAN1pec)).